Reading from the N-terminus, the 867-residue chain is DNA endonuclease RBBP8 (867 aa).

An essential for binding to the MRN complex and for RPA focus formation on DNA damage region spans residues 25-48 (ELWSKLKECHDKELQELLLKINKL). Coiled coils occupy residues 38 to 87 (LQEL…EDRL) and 120 to 141 (ITEL…SEQL). Disordered stretches follow at residues 141 to 171 (LHNM…PDSP) and 448 to 486 (RYGK…HSML). Over residues 154–166 (ENPADTGEGEDGV) the composition is skewed to acidic residues. The short motif at 489 to 493 (PLDLS) is the PXDLS motif element. Positions 508 to 531 (SSRGRTKQTFALVPEKPDPKKPLH) are damage-recruitment motif. Phosphothreonine is present on residues T817 and T829. Positions 843–867 (SPCQRPRRRQPYNAKFSSKIKEQKT) are disordered.

The protein belongs to the COM1/SAE2/CtIP family. As to quaternary structure, homotetramer; formed by antiparallel association of helical extensions protruding from the N-termini of two parallel coiled-coil dimers. Interacts with the MRN complex; the interaction links DNA sensing to resection. Interacts with samhd1. Post-translationally, phosphorylation at Thr-817 and Thr-829 promote interaction with nbn and recruitment to double-strand breaks (DSBs).

The protein localises to the nucleus. The protein resides in the chromosome. Its function is as follows. Endonuclease that cooperates with the MRE11-RAD50-NBN (MRN) complex in DNA-end resection, the first step of double-strand break (DSB) repair through the homologous recombination (HR) pathway. Functions downstream of the MRN complex and ATM, promotes ATR activation and its recruitment to DSBs in the S/G2 phase facilitating the generation of ssDNA. Specifically promotes the endonuclease activity of the MRN complex to clear DNA ends containing protein adducts: recruited to DSBs by nbn following phosphorylation, and promotes the endonuclease of mre11 to clear protein-DNA adducts and generate clean double-strand break ends. The chain is DNA endonuclease RBBP8 (rbbp8) from Xenopus tropicalis (Western clawed frog).